A 188-amino-acid chain; its full sequence is Methylated-DNA--protein-cysteine methyltransferase (188 aa).

Residues Y120, G121, and R134 each coordinate DNA. Catalysis depends on C151, which acts as the Nucleophile; methyl group acceptor. Position 157 (S157) interacts with DNA.

The protein belongs to the MGMT family.

The protein resides in the nucleus. The enzyme catalyses a 6-O-methyl-2'-deoxyguanosine in DNA + L-cysteinyl-[protein] = S-methyl-L-cysteinyl-[protein] + a 2'-deoxyguanosine in DNA. It carries out the reaction a 4-O-methyl-thymidine in DNA + L-cysteinyl-[protein] = a thymidine in DNA + S-methyl-L-cysteinyl-[protein]. In terms of biological role, involved in the cellular defense against the biological effects of O6-methylguanine (O6-MeG) and O4-methylthymine (O4-MeT) in DNA. Repairs the methylated nucleobase in DNA by stoichiometrically transferring the methyl group to a cysteine residue in the enzyme. This is a suicide reaction: the enzyme is irreversibly inactivated. Prefers double-stranded DNA over single-stranded DNA as substrate. In Saccharomyces cerevisiae (strain YJM789) (Baker's yeast), this protein is Methylated-DNA--protein-cysteine methyltransferase (MGT1).